We begin with the raw amino-acid sequence, 403 residues long: 3-oxoacyl-[acyl-carrier-protein] synthase 2 (403 aa).

Positions Val1 to Lys403 constitute a Ketosynthase family 3 (KS3) domain. Residues Cys158, His297, and His334 each act as for beta-ketoacyl synthase activity in the active site.

Belongs to the thiolase-like superfamily. Beta-ketoacyl-ACP synthases family.

The catalysed reaction is a fatty acyl-[ACP] + malonyl-[ACP] + H(+) = a 3-oxoacyl-[ACP] + holo-[ACP] + CO2. It carries out the reaction (9Z)-hexadecenoyl-[ACP] + malonyl-[ACP] + H(+) = 3-oxo-(11Z)-octadecenoyl-[ACP] + holo-[ACP] + CO2. It functions in the pathway lipid metabolism; fatty acid biosynthesis. Functionally, involved in the type II fatty acid elongation cycle. Catalyzes the elongation of a wide range of acyl-ACP by the addition of two carbons from malonyl-ACP to an acyl acceptor. Can efficiently catalyze the conversion of palmitoleoyl-ACP (cis-hexadec-9-enoyl-ACP) to cis-vaccenoyl-ACP (cis-octadec-11-enoyl-ACP), an essential step in the thermal regulation of fatty acid composition. The chain is 3-oxoacyl-[acyl-carrier-protein] synthase 2 (fabF) from Staphylococcus aureus.